A 159-amino-acid polypeptide reads, in one-letter code: Phosphopantetheine adenylyltransferase (159 aa).

Residue threonine 9 participates in substrate binding. Residues 9 to 10 (TF) and histidine 17 each bind ATP. Substrate contacts are provided by lysine 41, leucine 73, and arginine 87. Residues 88–90 (GLR), glutamate 98, and 123–129 (YSFISST) each bind ATP.

This sequence belongs to the bacterial CoaD family. Homohexamer. It depends on Mg(2+) as a cofactor.

It localises to the cytoplasm. It carries out the reaction (R)-4'-phosphopantetheine + ATP + H(+) = 3'-dephospho-CoA + diphosphate. Its pathway is cofactor biosynthesis; coenzyme A biosynthesis; CoA from (R)-pantothenate: step 4/5. Its function is as follows. Reversibly transfers an adenylyl group from ATP to 4'-phosphopantetheine, yielding dephospho-CoA (dPCoA) and pyrophosphate. The polypeptide is Phosphopantetheine adenylyltransferase (Pseudomonas syringae pv. tomato (strain ATCC BAA-871 / DC3000)).